A 171-amino-acid chain; its full sequence is Ribosome maturation factor RimP (171 aa).

This sequence belongs to the RimP family.

It localises to the cytoplasm. Its function is as follows. Required for maturation of 30S ribosomal subunits. This Anaeromyxobacter sp. (strain K) protein is Ribosome maturation factor RimP.